Consider the following 361-residue polypeptide: Mitochondrial import receptor subunit TOM40 homolog (361 aa).

Low complexity predominate over residues 1-10; sequence MGNVLAASSP. The tract at residues 1 to 71 is disordered; that stretch reads MGNVLAASSP…AASAGGTADD (71 aa). Residues 11–36 are compositionally biased toward pro residues; sequence PAGPPPPPAPPLVGLPPPPPSPPGFT. Residues 40 to 52 show a composition bias toward gly residues; sequence LGGGLGAGAGTGR. Positions 59-71 are enriched in low complexity; sequence GTAAASAGGTADD.

It belongs to the Tom40 family. Forms part of the preprotein translocase complex of the outer mitochondrial membrane (TOM complex) which consists of at least 7 different proteins (TOMM5, TOMM6, TOMM7, TOMM20, TOMM22, TOMM40 and TOMM70). Interacts with mitochondrial targeting sequences. Interacts with TIMM29; linking the TIM22 complex to the TOM complex. Forms a complex with BCAP31 (via C-terminus) which mediates the translocation of components of the mitochondrial membrane respiratory chain NADH dehydrogenase (Complex I) from the cytosol to the mitochondria. Interacts (via N-terminus) with CYP1A1 (via mitochondrial targeting signal); this interaction is required for CYP1A1 translocation across the mitochondrial outer membrane.

It localises to the mitochondrion outer membrane. Its function is as follows. Channel-forming protein essential for import of protein precursors into mitochondria. Plays a role in the assembly of the mitochondrial membrane respiratory chain NADH dehydrogenase (Complex I) by forming a complex with BCAP31 and mediating the translocation of Complex I components from the cytosol to the mitochondria. The protein is Mitochondrial import receptor subunit TOM40 homolog of Bos taurus (Bovine).